The following is a 78-amino-acid chain: UPF0335 protein A1E_00570 (78 aa).

It belongs to the UPF0335 family.

The chain is UPF0335 protein A1E_00570 from Rickettsia canadensis (strain McKiel).